A 154-amino-acid polypeptide reads, in one-letter code: Ribonuclease 8 (154 aa).

Residues 1-27 form the signal peptide; the sequence is MAPARAGCCPLLLLLLGLWVAQIPVSA. His42 acts as the Proton acceptor in catalysis. Disulfide bonds link Cys64/Cys118 and Cys89/Cys96. Residues 65–69 and Lys90 contribute to the substrate site; that span reads KDLNT. His149 (proton donor) is an active-site residue.

This sequence belongs to the pancreatic ribonuclease family.

It is found in the secreted. Functionally, has a low ribonuclease activity. This is Ribonuclease 8 (RNASE8) from Chlorocebus aethiops (Green monkey).